Here is a 782-residue protein sequence, read N- to C-terminus: MDPKESLTPPSREEIPSSVLGRERAHVMDFYKSLRGGTPVKVSAASPSLAAVSQPDSKQQRLAVDFPKGSGSNAQQPDLSKAVSLSMGLYMGETETKVMGSDLGFPQQGQISLSSGETDFRLLEESIANLSRSTSVPENPKSSASAAGPAAPAEKAFPKTHSDGAPEQPNVKGQTGTNGGNVKLFTTDQSTFDIWRKKLQDLELPSGSPGKETSESPWSSDLLIDENCLLSPLAGEEDPFLLEGSSTEDCKPLVLPDTKPKVKDNGELILPSPNSVPLPQVKTEKEDFIELCTPGVIKQEKLGPAYCQASFSGANIIGGKMSAISVHGVSTSGGQLYHYDMNTAASLSKQQEQKPLFNVIPPIPVGSENWNRCQGSGDDNLTSLGTLNFSGRSVFSNGYSSPGMRPDVSSPPSSSSAATGPPPKLCLVCSDEASGCHYGVLTCGSCKVFFKRAVEGQHNYLCAGRNDCIIDKIRRKNCPACRYRKCLQAGMNLEARKTKKKIKGIQQATTGVSQETSENSANKTIVPATLPQLTPTLVSLLEVIEPEVLYAGYDSSIPDSTWRIMTALNMLGGRQVIAAVKWAKAIPGFRNLHLDDQMTLLQYSWMFLMVFALGWRSYRQSSASLLCFAPDLVINEQRMALPCMYDQCRHMLYVSSELQRLQVSYEEYLCMKTLLLLSSVPKDGLKSQELFDEIRMTYIKELGKAIVKREGNSSQNWQRFYQLTKLLDSMHDVVENLLNYCFQTFLDKTMSIEFPEMLAEIITNQLPKYSSGNIKKLLFHQK.

The interval 1–20 (MDPKESLTPPSREEIPSSVL) is disordered. The segment at 1 to 425 (MDPKESLTPP…SAATGPPPKL (425 aa)) is modulating. Position 8 is a phosphothreonine (Thr8). Residue Arg24 is modified to Omega-N-methylarginine. Ser46 is modified (phosphoserine). The tract at residues 48 to 79 (SLAAVSQPDSKQQRLAVDFPKGSGSNAQQPDL) is disordered. Residues Ser114, Ser135, Ser142, Ser208, Ser216, and Ser231 each carry the phosphoserine modification. Residues 130 to 184 (LSRSTSVPENPKSSASAAGPAAPAEKAFPKTHSDGAPEQPNVKGQTGTNGGNVKL) form a disordered region. Low complexity predominate over residues 140–155 (PKSSASAAGPAAPAEK). Lys263 is covalently cross-linked (Glycyl lysine isopeptide (Lys-Gly) (interchain with G-Cter in SUMO2)). Ser272 carries the post-translational modification Phosphoserine. Residues Lys282 and Lys298 each participate in a glycyl lysine isopeptide (Lys-Gly) (interchain with G-Cter in SUMO); alternate cross-link. Glycyl lysine isopeptide (Lys-Gly) (interchain with G-Cter in SUMO2); alternate cross-links involve residues Lys282 and Lys298. Ser312 and Ser410 each carry phosphoserine. A Glycyl lysine isopeptide (Lys-Gly) (interchain with G-Cter in ubiquitin) cross-link involves residue Lys424. 2 NR C4-type zinc fingers span residues 426 to 446 (CLVCSDEASGCHYGVLTCGSC) and 462 to 486 (CAGRNDCIIDKIRRKNCPACRYRKC). Positions 426–491 (CLVCSDEASG…RYRKCLQAGM (66 aa)) form a DNA-binding region, nuclear receptor. Lys485, Lys497, Lys499, and Lys500 each carry N6-acetyllysine. Residues 490 to 782 (GMNLEARKTK…NIKKLLFHQK (293 aa)) form an interaction with CLOCK region. Residues 492 to 528 (NLEARKTKKKIKGIQQATTGVSQETSENSANKTIVPA) are hinge. An NR LBD domain is found at 529-763 (TLPQLTPTLV…FPEMLAEIIT (235 aa)). The tract at residues 537-702 (LVSLLEVIEP…EIRMTYIKEL (166 aa)) is interaction with CRY1. Lys708 participates in a covalent cross-link: Glycyl lysine isopeptide (Lys-Gly) (interchain with G-Cter in SUMO).

It belongs to the nuclear hormone receptor family. NR3 subfamily. Heteromultimeric cytoplasmic complex with HSP90AA1, HSPA1A/HSPA1B, and FKBP5 or another immunophilin such as PPID, STIP1, or the immunophilin homolog PPP5C. Upon ligand binding FKBP5 dissociates from the complex and FKBP4 takes its place, thereby linking the complex to dynein and mediating transport to the nucleus, where the complex dissociates. Probably forms a complex composed of chaperones HSP90 and HSP70, co-chaperones CDC37, PPP5C, TSC1 and client protein TSC2, CDK4, AKT, RAF1 and NR3C1; this complex does not contain co-chaperones STIP1/HOP and PTGES3/p23. Directly interacts with UNC45A. Binds to DNA as a homodimer, and as heterodimer with NR3C2 or the retinoid X receptor. Binds STAT5A and STAT5B homodimers and heterodimers. Interacts with NRIP1, POU2F1, POU2F2 and TRIM28. Interacts with several coactivator complexes, including the SMARCA4 complex, CREBBP/EP300, TADA2L (Ada complex) and p160 coactivators such as NCOA2 and NCOA6. Interaction with BAG1 inhibits transactivation. Interacts with HEXIM1 and TGFB1I1. Interacts with NCOA1. Interacts with NCOA3, SMARCA4, SMARCC1, SMARCD1, and SMARCE1. Interacts with CLOCK, CRY1 and CRY2 in a ligand-dependent fashion. Interacts with CIART. Interacts with RWDD3. Interacts with UBE2I/UBC9 and this interaction is enhanced in the presence of RWDD3. Interacts with GRIP1. Interacts with NR4A3 (via nuclear receptor DNA-binding domain), represses transcription activity of NR4A3 on the POMC promoter Nur response element (NurRE). Directly interacts with PNRC2 to attract and form a complex with UPF1 and DCP1A; the interaction leads to rapid mRNA degradation. Interacts with GSK3B. Interacts with FNIP1 and FNIP2. Interacts (via C-terminus) with HNRNPU (via C-terminus). Interacts with MCM3AP. Interacts (via domain NR LBD) with HSP90AA1 and HSP90AB1. In the absence of hormonal ligand, interacts with TACC1. Interacts (via NR LBD domain) with ZNF764 (via KRAB domain); the interaction regulates transcription factor activity of NR3C1 by directing its actions toward certain biologic pathways. Post-translationally, acetylation by CLOCK reduces its binding to glucocorticoid response elements and its transcriptional activity. In terms of processing, increased proteasome-mediated degradation in response to glucocorticoids. Phosphorylated in the absence of hormone; becomes hyperphosphorylated in the presence of glucocorticoid. The Ser-208, Ser-231 and Ser-410-phosphorylated forms are mainly cytoplasmic, and the Ser-216-phosphorylated form is nuclear. Phosphorylation at Ser-216 increases transcriptional activity. Phosphorylation at Ser-208, Ser-231 and Ser-410 decreases signaling capacity. Phosphorylation at Ser-410 may protect from glucocorticoid-induced apoptosis. Phosphorylation at Ser-208 and Ser-216 is not required in regulation of chromosome segregation. May be dephosphorylated by PPP5C, attenuates NR3C1 action. Post-translationally, ubiquitinated by UBR5, leading to its degradation: UBR5 specifically recognizes and binds ligand-bound NR3C1 when it is not associated with coactivators (NCOAs). In presence of NCOAs, the UBR5-degron is not accessible, preventing its ubiquitination and degradation. In terms of processing, sumoylation at Lys-282 and Lys-298 negatively regulates its transcriptional activity. Sumoylation at Lys-708 positively regulates its transcriptional activity in the presence of RWDD3. Sumoylation at Lys-282 and Lys-298 is dispensable whereas sumoylation at Lys-708 is critical for the stimulatory effect of RWDD3 on its transcriptional activity. Heat shock increases sumoylation in a RWDD3-dependent manner.

It localises to the cytoplasm. The protein resides in the nucleus. Its subcellular location is the mitochondrion. The protein localises to the cytoskeleton. It is found in the spindle. It localises to the microtubule organizing center. The protein resides in the centrosome. Its subcellular location is the chromosome. The protein localises to the nucleoplasm. Receptor for glucocorticoids (GC). Has a dual mode of action: as a transcription factor that binds to glucocorticoid response elements (GRE), both for nuclear and mitochondrial DNA, and as a modulator of other transcription factors. Affects inflammatory responses, cellular proliferation and differentiation in target tissues. Involved in chromatin remodeling. Plays a role in rapid mRNA degradation by binding to the 5' UTR of target mRNAs and interacting with PNRC2 in a ligand-dependent manner which recruits the RNA helicase UPF1 and the mRNA-decapping enzyme DCP1A, leading to RNA decay. Could act as a coactivator for STAT5-dependent transcription upon growth hormone (GH) stimulation and could reveal an essential role of hepatic GR in the control of body growth. Mediates glucocorticoid-induced apoptosis. Promotes accurate chromosome segregation during mitosis. May act as a tumor suppressor. May play a negative role in adipogenesis through the regulation of lipolytic and antilipogenic gene expression. This chain is Glucocorticoid receptor (NR3C1), found in Sus scrofa (Pig).